A 114-amino-acid chain; its full sequence is C-X-C motif chemokine 5 (114 aa).

A signal peptide spans 1–36 (MSLLSSRAARVPGPSSSLCALLVLLLLLTQPGPIAS). 2 disulfides stabilise this stretch: Cys49/Cys75 and Cys51/Cys91.

The protein belongs to the intercrine alpha (chemokine CxC) family. As to quaternary structure, monomer. Homodimer. Post-translationally, N-terminal processed forms ENA-78(8-78) and ENA-78(9-78) are produced by proteolytic cleavage after secretion from peripheral blood monocytes.

The protein localises to the secreted. Its function is as follows. Involved in neutrophil activation. In vitro, ENA-78(8-78) and ENA-78(9-78) show a threefold higher chemotactic activity for neutrophil granulocytes. The polypeptide is C-X-C motif chemokine 5 (CXCL5) (Homo sapiens (Human)).